The following is a 463-amino-acid chain: Rop guanine nucleotide exchange factor 4 (463 aa).

2 disordered regions span residues 1–25 and 55–87; these read MESS…YRRT and GHEE…SDID. Residues 59–68 show a composition bias toward acidic residues; that stretch reads DVSEDAEEPK. Residues 69–78 are compositionally biased toward basic and acidic residues; that stretch reads DDVVNDVHGD. Positions 84–463 constitute a PRONE domain; sequence SDIDSAEDAE…VDRTVRNRDD (380 aa).

In terms of assembly, interacts with ARAC10/ROP11. Expressed in root vascular tissue and trichoblast cell files. Expressed in root metaxylem cell files. Expressed in guard cells of cotyledons, rosette leaves, sepals, petal, stigmas and siliques. Expressed in root metaxylem cell files.

The protein localises to the cytoplasm. The protein resides in the cell membrane. Functionally, guanine-nucleotide exchange factor (GEF) that acts as an activator of Rop (Rho of plants) GTPases by promoting the exchange of GDP for GTP. In association with ROPGEF1, acts as a specific regulator of ARAC10/ROP11 function in ABA-mediated stomatal closure. In Arabidopsis thaliana (Mouse-ear cress), this protein is Rop guanine nucleotide exchange factor 4 (ROPGEF4).